We begin with the raw amino-acid sequence, 55 residues long: Large ribosomal subunit protein bL33 (55 aa).

It belongs to the bacterial ribosomal protein bL33 family.

The chain is Large ribosomal subunit protein bL33 from Burkholderia ambifaria (strain MC40-6).